Reading from the N-terminus, the 275-residue chain is 4-hydroxy-3-methylbut-2-enyl diphosphate reductase (275 aa).

[4Fe-4S] cluster is bound at residue cysteine 12. (2E)-4-hydroxy-3-methylbut-2-enyl diphosphate is bound by residues histidine 40 and histidine 70. Dimethylallyl diphosphate is bound by residues histidine 40 and histidine 70. Isopentenyl diphosphate-binding residues include histidine 40 and histidine 70. Cysteine 92 is a [4Fe-4S] cluster binding site. Residue histidine 119 participates in (2E)-4-hydroxy-3-methylbut-2-enyl diphosphate binding. Residue histidine 119 participates in dimethylallyl diphosphate binding. Histidine 119 lines the isopentenyl diphosphate pocket. Glutamate 121 acts as the Proton donor in catalysis. Threonine 151 contacts (2E)-4-hydroxy-3-methylbut-2-enyl diphosphate. Cysteine 181 serves as a coordination point for [4Fe-4S] cluster. The (2E)-4-hydroxy-3-methylbut-2-enyl diphosphate site is built by serine 209, serine 210, asparagine 211, and serine 251. Residues serine 209, serine 210, asparagine 211, and serine 251 each coordinate dimethylallyl diphosphate. Positions 209, 210, 211, and 251 each coordinate isopentenyl diphosphate.

The protein belongs to the IspH family. [4Fe-4S] cluster serves as cofactor.

It carries out the reaction isopentenyl diphosphate + 2 oxidized [2Fe-2S]-[ferredoxin] + H2O = (2E)-4-hydroxy-3-methylbut-2-enyl diphosphate + 2 reduced [2Fe-2S]-[ferredoxin] + 2 H(+). It catalyses the reaction dimethylallyl diphosphate + 2 oxidized [2Fe-2S]-[ferredoxin] + H2O = (2E)-4-hydroxy-3-methylbut-2-enyl diphosphate + 2 reduced [2Fe-2S]-[ferredoxin] + 2 H(+). The protein operates within isoprenoid biosynthesis; dimethylallyl diphosphate biosynthesis; dimethylallyl diphosphate from (2E)-4-hydroxy-3-methylbutenyl diphosphate: step 1/1. It functions in the pathway isoprenoid biosynthesis; isopentenyl diphosphate biosynthesis via DXP pathway; isopentenyl diphosphate from 1-deoxy-D-xylulose 5-phosphate: step 6/6. In terms of biological role, catalyzes the conversion of 1-hydroxy-2-methyl-2-(E)-butenyl 4-diphosphate (HMBPP) into a mixture of isopentenyl diphosphate (IPP) and dimethylallyl diphosphate (DMAPP). Acts in the terminal step of the DOXP/MEP pathway for isoprenoid precursor biosynthesis. This is 4-hydroxy-3-methylbut-2-enyl diphosphate reductase from Thermotoga maritima (strain ATCC 43589 / DSM 3109 / JCM 10099 / NBRC 100826 / MSB8).